A 302-amino-acid chain; its full sequence is Sulfate adenylyltransferase subunit 2 (302 aa).

The protein belongs to the PAPS reductase family. CysD subfamily. In terms of assembly, heterodimer composed of CysD, the smaller subunit, and CysN.

It catalyses the reaction sulfate + ATP + H(+) = adenosine 5'-phosphosulfate + diphosphate. It functions in the pathway sulfur metabolism; hydrogen sulfide biosynthesis; sulfite from sulfate: step 1/3. With CysN forms the ATP sulfurylase (ATPS) that catalyzes the adenylation of sulfate producing adenosine 5'-phosphosulfate (APS) and diphosphate, the first enzymatic step in sulfur assimilation pathway. APS synthesis involves the formation of a high-energy phosphoric-sulfuric acid anhydride bond driven by GTP hydrolysis by CysN coupled to ATP hydrolysis by CysD. The chain is Sulfate adenylyltransferase subunit 2 from Erwinia tasmaniensis (strain DSM 17950 / CFBP 7177 / CIP 109463 / NCPPB 4357 / Et1/99).